Consider the following 377-residue polypeptide: Beta-lactamase (377 aa).

An N-terminal signal peptide occupies residues 1–19; the sequence is MFKTTLCALLITASCSTFA. The Acyl-ester intermediate role is filled by serine 80. A beta-lactam-binding residues include serine 80, glutamine 136, tyrosine 166, asparagine 168, alanine 334, and asparagine 359.

This sequence belongs to the class-C beta-lactamase family. In terms of assembly, monomer.

The protein localises to the periplasm. The catalysed reaction is a beta-lactam + H2O = a substituted beta-amino acid. With respect to regulation, inhibited by the beta-lactamase-blocking agents avibactam, enmetazobactam, relebactam, nacubactam, vaborbactam, taniborbactam, zidebactam, and beta-lactam-analog boronic acids, via a covalent binding to Ser-80. Inhibited by non-beta-lactam, benzo(b)thiophene-2-boronic acid (BZBTH2B) and various cyclic boronates. Not inhibited by clavulanic acid. Inhibited by O-aryloxycarbonyl hydroxamates, via cross-linking of the active site Ser-80 to Lys-331. Weakly inhibited by citric acid. Class C beta-lactamase which confers resistance to penicillins and cephalosporins. Has benzylpenicillin- and cephaloridine-hydrolyzing activity. Has weak cefuroxime, cefotaxime, cefoxitin and oxacillin-hydrolyzing activities. The protein is Beta-lactamase of Escherichia coli (strain K12).